The sequence spans 175 residues: Peptide deformylase 1 (175 aa).

Residues cysteine 99 and histidine 141 each coordinate Fe cation. Glutamate 142 is a catalytic residue. Residue histidine 145 participates in Fe cation binding.

This sequence belongs to the polypeptide deformylase family. Fe(2+) is required as a cofactor.

It catalyses the reaction N-terminal N-formyl-L-methionyl-[peptide] + H2O = N-terminal L-methionyl-[peptide] + formate. Functionally, removes the formyl group from the N-terminal Met of newly synthesized proteins. Requires at least a dipeptide for an efficient rate of reaction. N-terminal L-methionine is a prerequisite for activity but the enzyme has broad specificity at other positions. The polypeptide is Peptide deformylase 1 (Rickettsia conorii (strain ATCC VR-613 / Malish 7)).